We begin with the raw amino-acid sequence, 187 residues long: UPF0340 protein SPN23F05980 (187 aa).

Belongs to the UPF0340 family.

This is UPF0340 protein SPN23F05980 from Streptococcus pneumoniae (strain ATCC 700669 / Spain 23F-1).